The primary structure comprises 364 residues: Probable mannose-1-phosphate guanylyltransferase 2 (364 aa).

GDP-alpha-D-mannose is bound by residues Leu6 and Val7. Residues Gly9, Gly11, Thr12, Arg13, and Lys23 each coordinate diphosphate. The GDP-alpha-D-mannose site is built by Gly88, Asn112, Asp114, Gly149, and Asn176.

This sequence belongs to the transferase hexapeptide repeat family.

It carries out the reaction alpha-D-mannose 1-phosphate + GTP + H(+) = GDP-alpha-D-mannose + diphosphate. It functions in the pathway nucleotide-sugar biosynthesis; GDP-alpha-D-mannose biosynthesis; GDP-alpha-D-mannose from alpha-D-mannose 1-phosphate (GTP route): step 1/1. Catalyzes a reaction of the Smirnoff-Wheeler pathway, the major route to ascorbate biosynthesis in plants. The polypeptide is Probable mannose-1-phosphate guanylyltransferase 2 (Arabidopsis thaliana (Mouse-ear cress)).